Here is a 449-residue protein sequence, read N- to C-terminus: Protein trichome birefringence-like 35 (449 aa).

A helical; Signal-anchor for type II membrane protein membrane pass occupies residues 12 to 29 (LPLAGLLFILVVTFMILF). The GDS motif signature appears at 185 to 187 (GDS). A DCXHWCLPGXXDXWN motif motif is present at residues 428–442 (DCTHWCVPGVPDVWN).

Belongs to the PC-esterase family. TBL subfamily.

It localises to the membrane. Its function is as follows. May act as a bridging protein that binds pectin and other cell wall polysaccharides. Probably involved in maintaining esterification of pectins. May be involved in the specific O-acetylation of cell wall polymers. The polypeptide is Protein trichome birefringence-like 35 (TBL35) (Arabidopsis thaliana (Mouse-ear cress)).